We begin with the raw amino-acid sequence, 268 residues long: Nickel import ATP-binding protein NikE (268 aa).

One can recognise an ABC transporter domain in the interval 4–252; it reads LNVSDLSHHY…SSDAGRVLQN (249 aa). 45–52 provides a ligand contact to ATP; the sequence is GRSGCGKS.

Belongs to the ABC transporter superfamily. Nickel importer (TC 3.A.1.5.3) family. The complex is composed of two ATP-binding proteins (NikD and NikE), two transmembrane proteins (NikB and NikC) and a solute-binding protein (NikA).

It is found in the cell inner membrane. It catalyses the reaction Ni(2+)(out) + ATP + H2O = Ni(2+)(in) + ADP + phosphate + H(+). Functionally, part of the ABC transporter complex NikABCDE involved in nickel import. Responsible for energy coupling to the transport system. This is Nickel import ATP-binding protein NikE from Shigella dysenteriae serotype 1 (strain Sd197).